A 231-amino-acid chain; its full sequence is Nuclear transcription factor Y subunit C-9 (231 aa).

Residues 211 to 231 (NPYMGQPMWQQQAPDQPDQEN) are disordered.

Belongs to the NFYC/HAP5 subunit family. Heterotrimeric transcription factor composed of three components, NF-YA, NF-YB and NF-YC. Interacts with NFYA2, NFYB2, CO and RGA. Interacts with REF6 (via N-terminus). Ubiquitous. Present in etiolated seedlings.

It localises to the nucleus. Functionally, stimulates the transcription of various genes by recognizing and binding to a CCAAT motif in promoters. Interacts with REF6 to directly regulate SOC1 transcription in response to flowering signals from photoperiod and gibberellic acid pathways. The chain is Nuclear transcription factor Y subunit C-9 (NFYC9) from Arabidopsis thaliana (Mouse-ear cress).